The primary structure comprises 439 residues: 3-phosphoshikimate 1-carboxyvinyltransferase (439 aa).

The 3-phosphoshikimate site is built by Lys-29 and Arg-34. Lys-29 serves as a coordination point for phosphoenolpyruvate. 2 residues coordinate phosphoenolpyruvate: Gly-99 and Arg-128. 6 residues coordinate 3-phosphoshikimate: Ser-171, Ser-172, Gln-173, Ser-199, Asp-316, and Lys-343. Gln-173 lines the phosphoenolpyruvate pocket. Catalysis depends on Asp-316, which acts as the Proton acceptor. Residues Arg-347, Arg-390, and Lys-416 each contribute to the phosphoenolpyruvate site.

It belongs to the EPSP synthase family. Monomer.

It is found in the cytoplasm. The catalysed reaction is 3-phosphoshikimate + phosphoenolpyruvate = 5-O-(1-carboxyvinyl)-3-phosphoshikimate + phosphate. It functions in the pathway metabolic intermediate biosynthesis; chorismate biosynthesis; chorismate from D-erythrose 4-phosphate and phosphoenolpyruvate: step 6/7. Functionally, catalyzes the transfer of the enolpyruvyl moiety of phosphoenolpyruvate (PEP) to the 5-hydroxyl of shikimate-3-phosphate (S3P) to produce enolpyruvyl shikimate-3-phosphate and inorganic phosphate. The sequence is that of 3-phosphoshikimate 1-carboxyvinyltransferase from Deinococcus radiodurans (strain ATCC 13939 / DSM 20539 / JCM 16871 / CCUG 27074 / LMG 4051 / NBRC 15346 / NCIMB 9279 / VKM B-1422 / R1).